The primary structure comprises 147 residues: Angiogenin (147 aa).

The signal sequence occupies residues 1 to 24; that stretch reads MVMGLGVLLLVFVLGLGLTPPTLA. Q25 carries the post-translational modification Pyrrolidone carboxylic acid. Residue H37 is the Proton acceptor of the active site. TRNA contacts are provided by R45 and D46. 3 cysteine pairs are disulfide-bonded: C50–C105, C63–C116, and C81–C131. Positions 55–59 match the Nucleolar localization signal motif; it reads RRRGL. The tRNA site is built by C105 and V127. Catalysis depends on H138, which acts as the Proton donor.

Belongs to the pancreatic ribonuclease family. Homodimer. Interacts with RNH1; inhibiting ANG ribonuclease activity. Interacts with PCNA.

It localises to the secreted. Its subcellular location is the nucleus. It is found in the nucleolus. The protein resides in the cytoplasm. The protein localises to the stress granule. Its activity is regulated as follows. Has weak tRNA ribonuclease activity by itself due to partial autoinhibition by its C-terminus, which folds into a short alpha-helix that partially occludes the substrate-binding site. In absence of stress, the ribonuclease activity is inhibited by RNH1 in the cytoplasm. In response to stress, dissociates from RNH1 in the cytoplasm and associates with cytoplasmic ribosomes with vacant A-sites: ribosomes directly activate the tRNA ribonuclease activity of ANG by refolding the C-terminal alpha-helix. In response to stress, the angiogenic activity of ANG is inhibited by RNH1 in the nucleus. In terms of biological role, secreted ribonuclease that can either promote or restrict cell proliferation of target cells, depending on the context. Endocytosed in target cells via its receptor PLXNB2 and translocates to the cytoplasm or nucleus. Under stress conditions, localizes to the cytoplasm and promotes the assembly of stress granules (SGs): specifically cleaves a subset of tRNAs within anticodon loops to produce tRNA-derived stress-induced fragments (tiRNAs), resulting in translation repression and inhibition of cell proliferation. tiRNas also prevent formation of apoptosome, thereby promoting cell survival. Preferentially cleaves RNAs between a pyrimidine and an adenosine residue, suggesting that it cleaves the anticodon loop of tRNA(Ala) (32-UUAGCAU-38) after positions 33 and 36. Cleaves a subset of tRNAs, including tRNA(Ala), tRNA(Glu), tRNA(Gly), tRNA(Lys), tRNA(Val), tRNA(His), tRNA(Asp) and tRNA(Sec). Under growth conditions and in differentiated cells, translocates to the nucleus and stimulates ribosomal RNA (rRNA) transcription, including that containing the initiation site sequences of 45S rRNA, thereby promoting cell growth and proliferation. Angiogenin induces vascularization of normal and malignant tissues via its ability to promote rRNA transcription. Involved in hematopoietic stem and progenitor cell (HSPC) growth and survival by promoting rRNA transcription in growth conditions and inhibiting translation in response to stress, respectively. Mediates the crosstalk between myeloid and intestinal epithelial cells to protect the intestinal epithelial barrier integrity: secreted by myeloid cells and promotes intestinal epithelial cells proliferation and survival. Also mediates osteoclast-endothelial cell crosstalk in growing bone: produced by osteoclasts and protects the neighboring vascular cells against senescence by promoting rRNA transcription. The chain is Angiogenin (ANG) from Pan troglodytes (Chimpanzee).